The primary structure comprises 489 residues: Acetyl-coenzyme A carboxylase carboxyl transferase subunit beta, chloroplastic (489 aa).

Residues Leu-225–Lys-489 enclose the CoA carboxyltransferase N-terminal domain. 4 residues coordinate Zn(2+): Cys-229, Cys-232, Cys-245, and Cys-248. The C4-type zinc-finger motif lies at Cys-229–Cys-248.

The protein belongs to the AccD/PCCB family. Acetyl-CoA carboxylase is a heterohexamer composed of biotin carboxyl carrier protein, biotin carboxylase and 2 subunits each of ACCase subunit alpha and ACCase plastid-coded subunit beta (accD). The cofactor is Zn(2+).

It is found in the plastid. Its subcellular location is the chloroplast stroma. It catalyses the reaction N(6)-carboxybiotinyl-L-lysyl-[protein] + acetyl-CoA = N(6)-biotinyl-L-lysyl-[protein] + malonyl-CoA. It participates in lipid metabolism; malonyl-CoA biosynthesis; malonyl-CoA from acetyl-CoA: step 1/1. In terms of biological role, component of the acetyl coenzyme A carboxylase (ACC) complex. Biotin carboxylase (BC) catalyzes the carboxylation of biotin on its carrier protein (BCCP) and then the CO(2) group is transferred by the transcarboxylase to acetyl-CoA to form malonyl-CoA. The sequence is that of Acetyl-coenzyme A carboxylase carboxyl transferase subunit beta, chloroplastic from Brassica napus (Rape).